The primary structure comprises 132 residues: Small ribosomal subunit protein uS8 (132 aa).

Belongs to the universal ribosomal protein uS8 family. As to quaternary structure, part of the 30S ribosomal subunit. Contacts proteins S5 and S12.

In terms of biological role, one of the primary rRNA binding proteins, it binds directly to 16S rRNA central domain where it helps coordinate assembly of the platform of the 30S subunit. The chain is Small ribosomal subunit protein uS8 from Caulobacter vibrioides (strain ATCC 19089 / CIP 103742 / CB 15) (Caulobacter crescentus).